The primary structure comprises 265 residues: Mlc titration factor A (265 aa).

The Zn(2+) site is built by His-111, His-148, His-152, and Glu-211.

Belongs to the MtfA family. As to quaternary structure, interacts with Mlc. Requires Zn(2+) as cofactor.

The protein resides in the cytoplasm. Functionally, involved in the modulation of the activity of the glucose-phosphotransferase system (glucose-PTS). Interacts with the transcriptional repressor Mlc, preventing its interaction with DNA and leading to the modulation of expression of genes regulated by Mlc, including ptsG, which encodes the PTS system glucose-specific EIICB component. Shows zinc-dependent metallopeptidase activity. This is Mlc titration factor A from Salmonella typhi.